Consider the following 60-residue polypeptide: Large ribosomal subunit protein uL30 (60 aa).

This sequence belongs to the universal ribosomal protein uL30 family. As to quaternary structure, part of the 50S ribosomal subunit.

This chain is Large ribosomal subunit protein uL30, found in Nocardioides sp. (strain ATCC BAA-499 / JS614).